The chain runs to 227 residues: Extracellular small neutral protease (227 aa).

An N-terminal signal peptide occupies residues 1 to 29 (MRITLPLLSTAVGLGLTAAVLGTGPAATA). Residues 30-42 (AAPQEPVRAAQLG) constitute a propeptide that is removed on maturation. Positions 156 and 158 each coordinate Ca(2+). Histidine 163 contacts Zn(2+). Residue glutamate 164 is part of the active site. Positions 167 and 173 each coordinate Zn(2+). Cysteine 179 and cysteine 192 are disulfide-bonded.

Belongs to the peptidase M7 family. Requires Ca(2+) as cofactor. The cofactor is Zn(2+). The N-terminus is blocked.

The protein resides in the secreted. The enzyme catalyses Hydrolyzes proteins with a preference for Tyr or Phe in the P1' position. Has no action on amino-acid p-nitroanilides.. This is Extracellular small neutral protease (snpA) from Streptomyces lividans.